Reading from the N-terminus, the 366-residue chain is Probable neutral protease 2 homolog B (366 aa).

The first 19 residues, 1–19 (MQVIVALAALSSLAAPALG), serve as a signal peptide directing secretion. A propeptide spanning residues 20-189 (FSIPRGVPVS…RGPRSRITKR (170 aa)) is cleaved from the precursor. 3 cysteine pairs are disulfide-bonded: cysteine 197/cysteine 267, cysteine 274/cysteine 292, and cysteine 306/cysteine 366. Histidine 317 serves as a coordination point for Zn(2+). The active site involves glutamate 318. Residues histidine 321 and aspartate 332 each contribute to the Zn(2+) site.

This sequence belongs to the peptidase M35 family. The cofactor is Zn(2+).

The protein localises to the secreted. It carries out the reaction Preferential cleavage of bonds with hydrophobic residues in P1'. Also 3-Asn-|-Gln-4 and 8-Gly-|-Ser-9 bonds in insulin B chain.. Probable secreted metalloprotease that shows high activities on basic nuclear substrates such as histone and protamine. May be involved in virulence. The chain is Probable neutral protease 2 homolog B (NpII-B) from Trichophyton rubrum (Athlete's foot fungus).